A 681-amino-acid chain; its full sequence is Envelope glycoprotein (681 aa).

An N-terminal signal peptide occupies residues 1-18 (MKTIYFLISLILIQSIKT). The Extracellular segment spans residues 19 to 648 (LPVLEIASNS…GLGGKWWTSD (630 aa)). Residues 38 to 188 (SGTLQKTEDV…FSRQGQGYRH (151 aa)) form a receptor-binding region. N94, N171, N190, N202, N207, N219, and N223 each carry an N-linked (GlcNAc...) asparagine; by host glycan. The segment at 223–428 (NQTCPPSLKP…PDSSPTTRPP (206 aa)) is disordered. 2 stretches are compositionally biased toward polar residues: residues 236 to 260 (PTVT…MNPS) and 278 to 315 (PHTT…TNPS). Residues 277-455 (GPHTTLNVVT…PFLDGLINTE (179 aa)) form a mucin-like region region. N-linked (GlcNAc...) asparagine; by host glycosylation is found at N310, N323, N336, N350, N360, N364, N381, N397, N475, and N487. The segment covering 327–347 (PTTQPATLLNNTNTTPTYNTL) has biased composition (low complexity). Polar residues-rich tracts occupy residues 348–365 (KYNL…TNND) and 373–394 (SEQT…TTGQ). The segment covering 395 to 428 (DTNSTTNIIMTTSDITSKHPTNSSPDSSPTTRPP) has biased composition (low complexity). The tract at residues 529 to 549 (GLSWIPFFGPGIEGLYTAGLI) is fusion peptide. N-linked (GlcNAc...) asparagine; by host glycans are attached at residues N564 and N619. Residues 649–669 (WGVLTNLGILLLLSIAVLIAL) form a helical membrane-spanning segment. Topologically, residues 670 to 681 (SCICRIFTKYIG) are cytoplasmic. S-palmitoyl cysteine; by host attachment occurs at residues C671 and C673.

This sequence belongs to the filoviruses glycoprotein family. As to quaternary structure, homotrimer; each monomer consists of a GP1 and a GP2 subunit linked by disulfide bonds. The resulting peplomers (GP1,2) protrude from the virus surface as spikes. GP1,2 interacts with human CD209 and CLEC4M (collectively referred to as DC-SIGN(R)). Asialoglycoprotein receptor (ASGP-R) may be a liver-specific receptor for GP1,2. Members of the Tyro3 receptor tyrosine kinase family may be cell entry factors interacting with GP1,2. In terms of processing, N-glycosylated. O-glycosylated in the mucin-like region. Post-translationally, specific enzymatic cleavages in vivo yield mature proteins. The precursor is processed into GP1 and GP2 by host cell furin in the trans Golgi, and maybe by other host proteases, to yield the mature GP1 and GP2 proteins. The cleavage site corresponds to the furin optimal cleavage sequence [KR]-X-[KR]-R. In terms of processing, GP1 is phosphorylated on serine residues between residues 260 and 273.

It localises to the virion membrane. The protein resides in the host cell membrane. Its function is as follows. GP1 is responsible for binding to the receptor(s) on target cells. Interacts with CD209/DC-SIGN and CLEC4M/DC-SIGNR which act as cofactors for virus entry into the host cell. Binding to CD209 and CLEC4M, which are respectively found on dendritic cells (DCs), and on endothelial cells of liver sinusoids and lymph node sinuses, facilitate infection of macrophages and endothelial cells. These interactions not only facilitate virus cell entry, but also allow capture of viral particles by DCs and subsequent transmission to susceptible cells without DCs infection (trans infection). In terms of biological role, GP2 acts as a class I viral fusion protein. Under the current model, the protein has at least 3 conformational states: pre-fusion native state, pre-hairpin intermediate state, and post-fusion hairpin state. During viral and target cell membrane fusion, the coiled coil regions (heptad repeats) assume a trimer-of-hairpins structure, positioning the fusion peptide in close proximity to the C-terminal region of the ectodomain. The formation of this structure appears to drive apposition and subsequent fusion of viral and target cell membranes. Responsible for penetration of the virus into the cell cytoplasm by mediating the fusion of the membrane of the endocytosed virus particle with the endosomal membrane. Low pH in endosomes induces an irreversible conformational change in GP2, releasing the fusion hydrophobic peptide. This chain is Envelope glycoprotein (GP), found in Chlorocebus aethiops (Green monkey).